The following is a 338-amino-acid chain: Phenylalanine--tRNA ligase alpha subunit (338 aa).

Glu-253 is a binding site for Mg(2+).

The protein belongs to the class-II aminoacyl-tRNA synthetase family. Phe-tRNA synthetase alpha subunit type 1 subfamily. As to quaternary structure, tetramer of two alpha and two beta subunits. Mg(2+) is required as a cofactor.

The protein localises to the cytoplasm. It catalyses the reaction tRNA(Phe) + L-phenylalanine + ATP = L-phenylalanyl-tRNA(Phe) + AMP + diphosphate + H(+). The protein is Phenylalanine--tRNA ligase alpha subunit of Legionella pneumophila (strain Paris).